The following is a 126-amino-acid chain: Holo-[acyl-carrier-protein] synthase (126 aa).

Mg(2+) is bound by residues aspartate 8 and glutamate 50.

This sequence belongs to the P-Pant transferase superfamily. AcpS family. It depends on Mg(2+) as a cofactor.

Its subcellular location is the cytoplasm. It catalyses the reaction apo-[ACP] + CoA = holo-[ACP] + adenosine 3',5'-bisphosphate + H(+). Functionally, transfers the 4'-phosphopantetheine moiety from coenzyme A to a Ser of acyl-carrier-protein. The polypeptide is Holo-[acyl-carrier-protein] synthase (Micrococcus luteus (strain ATCC 4698 / DSM 20030 / JCM 1464 / CCM 169 / CCUG 5858 / IAM 1056 / NBRC 3333 / NCIMB 9278 / NCTC 2665 / VKM Ac-2230) (Micrococcus lysodeikticus)).